The sequence spans 569 residues: Carotenoid cleavage dioxygenase 8 homolog B, chloroplastic (569 aa).

Residues 1–43 constitute a chloroplast transit peptide; sequence MSPAMLQASSLCVSAALSGAASRPGRLASQGHQGKRAVAQPLA. Positions 23–81 are disordered; that stretch reads RPGRLASQGHQGKRAVAQPLAASAVTEAAPPAPVVAPPARPVDAPRRRGGRGGGGGGGE. Residues 52-62 show a composition bias toward pro residues; sequence PPAPVVAPPAR. Residues His-251, His-301, His-368, and His-558 each coordinate Fe cation.

The protein belongs to the carotenoid oxygenase family. Fe(2+) is required as a cofactor. Expressed in parenchyma cells of the root stele, shoot apex, leaf buds, xylem parenchyma cells of the stem, inflorescences and panicles.

It localises to the plastid. Its subcellular location is the chloroplast. The enzyme catalyses 9-cis-10'-apo-beta-carotenal + 2 O2 = (2E,4E,6E)-7-hydroxy-4-methylhepta-2,4,6-trienal + (11R)-carlactone. It carries out the reaction all-trans-10'-apo-beta-carotenal + O2 = (2E,4E,6E)-4-methylocta-2,4,6-trienedial + 13-apo-beta-carotenone. Functionally, involved in strigolactones biosynthesis by cleaving the C(27) 9-cis-10'-apo-beta-carotenal produced by CCD7. Produces the C(19) carlactone and a C(8) hydroxyaldehyde. Also shows lower activity with all-trans-10'-apo-beta-carotenal producing a C(9) dialdehyde and the C(18) 13-apo-beta-carotenone. Strigolactones are hormones that inhibit tillering and shoot branching through the MAX-dependent pathway, contribute to the regulation of shoot architectural response to phosphate-limiting conditions and function as rhizosphere signal that stimulates hyphal branching of arbuscular mycorrhizal fungi and trigger seed germination of root parasitic weeds. The protein is Carotenoid cleavage dioxygenase 8 homolog B, chloroplastic (CCD8B) of Oryza sativa subsp. japonica (Rice).